Here is a 255-residue protein sequence, read N- to C-terminus: Hydroxyacylglutathione hydrolase (255 aa).

Zn(2+)-binding residues include H56, H58, D60, H61, H114, D133, and H171.

The protein belongs to the metallo-beta-lactamase superfamily. Glyoxalase II family. As to quaternary structure, monomer. Zn(2+) serves as cofactor.

It carries out the reaction an S-(2-hydroxyacyl)glutathione + H2O = a 2-hydroxy carboxylate + glutathione + H(+). It participates in secondary metabolite metabolism; methylglyoxal degradation; (R)-lactate from methylglyoxal: step 2/2. In terms of biological role, thiolesterase that catalyzes the hydrolysis of S-D-lactoyl-glutathione to form glutathione and D-lactic acid. This Bradyrhizobium sp. (strain BTAi1 / ATCC BAA-1182) protein is Hydroxyacylglutathione hydrolase.